The primary structure comprises 225 residues: GrpE protein homolog 2, mitochondrial (225 aa).

A mitochondrion-targeting transit peptide spans 1–32; the sequence is MAVRSLWAGRLRVQRLLAWSAAWESKGWPLPF. Residue Lys-142 is modified to N6-acetyllysine.

The protein belongs to the GrpE family. As to quaternary structure, probable component of the PAM complex at least composed of a mitochondrial HSP70 protein, GRPEL1 or GRPEL2, TIMM44, TIMM16/PAM16 and TIMM14/DNAJC19.

The protein resides in the mitochondrion matrix. In terms of biological role, essential component of the PAM complex, a complex required for the translocation of transit peptide-containing proteins from the inner membrane into the mitochondrial matrix in an ATP-dependent manner. Seems to control the nucleotide-dependent binding of mitochondrial HSP70 to substrate proteins. Stimulates ATPase activity of mt-HSP70. May also serve to modulate the interconversion of oligomeric (inactive) and monomeric (active) forms of mt-HSP70. This chain is GrpE protein homolog 2, mitochondrial (GRPEL2), found in Homo sapiens (Human).